Reading from the N-terminus, the 187-residue chain is MYTVADLKKGLKLTLDGAPYLVIAFEFSKPGKGQALYRTKMRNMITGVILDRTYRSGETFEPARLEERRMQYLYKEDTHYTFMDNQTFEQVQMDEDAVGDAKNFLIDNLEVDILLFGEKAIGVTLPNFVNLRVVQTDPWVKGDTSGSDSKPATVETGYILRVPPFIEEGEMIVIDTRSGEYSTRVKG.

It belongs to the elongation factor P family.

Its subcellular location is the cytoplasm. Its pathway is protein biosynthesis; polypeptide chain elongation. Involved in peptide bond synthesis. Stimulates efficient translation and peptide-bond synthesis on native or reconstituted 70S ribosomes in vitro. Probably functions indirectly by altering the affinity of the ribosome for aminoacyl-tRNA, thus increasing their reactivity as acceptors for peptidyl transferase. The protein is Elongation factor P 2 of Geobacter sulfurreducens (strain ATCC 51573 / DSM 12127 / PCA).